A 463-amino-acid chain; its full sequence is tRNA dimethylallyltransferase 9 (463 aa).

Residue 57 to 64 (GPTGAGKS) participates in ATP binding. Substrate is bound at residue 59-64 (TGAGKS). The interaction with substrate tRNA stretch occupies residues 82–85 (DSVQ).

It belongs to the IPP transferase family. Mg(2+) is required as a cofactor. Expressed ubiquitously, with highest expression in proliferating tissues.

The protein resides in the cytoplasm. It catalyses the reaction adenosine(37) in tRNA + dimethylallyl diphosphate = N(6)-dimethylallyladenosine(37) in tRNA + diphosphate. Catalyzes the transfer of a dimethylallyl group onto the adenine at position 37 in tRNAs that read codons beginning with uridine, leading to the formation of N6-(dimethylallyl)adenosine (i(6)A). Involved in the cis-type cytokinin biosynthesis. The sequence is that of tRNA dimethylallyltransferase 9 (IPT9) from Arabidopsis thaliana (Mouse-ear cress).